Reading from the N-terminus, the 136-residue chain is MAALLGRRFGMAAAALIALAALGSAASGTASKSSFVKSTVKAHDVVIFSKSYCPYCRRAKAVFKELELKKEPYVVELDQREDGWEIQDALSDMVGRRTVPQVFVHGKHLGGSDDTVEAYESGKLAKLLNIDVKEDL.

The 103-residue stretch at S33–D135 folds into the Glutaredoxin domain. An intrachain disulfide couples C53 to C56.

It belongs to the glutaredoxin family. CPYC subfamily.

The protein resides in the cytoplasm. Has a glutathione-disulfide oxidoreductase activity in the presence of NADPH and glutathione reductase. Reduces low molecular weight disulfides and proteins. The polypeptide is Glutaredoxin-C8 (GRXC8) (Oryza sativa subsp. japonica (Rice)).